A 216-amino-acid polypeptide reads, in one-letter code: MARVQLWVAAACAVVLALAAPSLAGDPDMLQDVCVADLASPVKLNGFPCKANVTADDFFFAGLKNPGNTNNPAGSNVTAANVQSFPGVNTLGVSMARIDYAPGGQNPPHTHPRATEIIFVLEGVLEVGFITTANKLFTKTVTAGEVFVFPRGLVHFQQNRGHGPAAVIAAFNSQLQGTQAIAATLFAAAPPVPSDVLAKAFRVDVPQVDAIKAKFK.

The N-terminal stretch at 1–24 is a signal peptide; it reads MARVQLWVAAACAVVLALAAPSLA. The cysteines at positions 34 and 49 are disulfide-linked. N52 and N76 each carry an N-linked (GlcNAc...) asparagine glycan. Residues 61-209 enclose the Cupin type-1 domain; sequence AGLKNPGNTN…AFRVDVPQVD (149 aa). Positions 109, 111, 116, and 155 each coordinate Mn(2+).

It belongs to the germin family. Oligomer (believed to be a pentamer but probably hexamer).

The protein localises to the secreted. The protein resides in the extracellular space. It localises to the apoplast. Functionally, may play a role in plant defense. Probably has no oxalate oxidase activity even if the active site is conserved. The polypeptide is Germin-like protein 1-1 (GER4) (Oryza sativa subsp. japonica (Rice)).